Here is a 345-residue protein sequence, read N- to C-terminus: 4-hydroxy-2-oxovalerate aldolase 1 (345 aa).

A Pyruvate carboxyltransferase domain is found at 9-261 (IRVTDTSLRD…RTGIDFFAIA (253 aa)). A substrate-binding site is contributed by 17 to 18 (RD). Aspartate 18 is a binding site for Mn(2+). Histidine 21 acts as the Proton acceptor in catalysis. Serine 171 and histidine 200 together coordinate substrate. Residues histidine 200 and histidine 202 each coordinate Mn(2+). Tyrosine 291 provides a ligand contact to substrate.

This sequence belongs to the 4-hydroxy-2-oxovalerate aldolase family.

It carries out the reaction (S)-4-hydroxy-2-oxopentanoate = acetaldehyde + pyruvate. This is 4-hydroxy-2-oxovalerate aldolase 1 from Nocardia farcinica (strain IFM 10152).